The chain runs to 256 residues: H-2 class II histocompatibility antigen, A-B alpha chain (256 aa).

The first 23 residues, Met-1–Gly-23, serve as a signal peptide directing secretion. An alpha-1 region spans residues Glu-24–Asn-111. At Glu-24–Glu-218 the chain is on the extracellular side. The alpha-2 stretch occupies residues Glu-112–Trp-205. The region spanning Pro-114–Glu-206 is the Ig-like C1-type domain. Residues Cys-134 and Cys-190 are joined by a disulfide bond. The N-linked (GlcNAc...) asparagine glycan is linked to Asn-145. The tract at residues Glu-206–Glu-218 is connecting peptide. A helical transmembrane segment spans residues Thr-219 to Leu-244. Residues Arg-245–Leu-256 lie on the Cytoplasmic side of the membrane.

The protein belongs to the MHC class II family.

The protein localises to the membrane. The polypeptide is H-2 class II histocompatibility antigen, A-B alpha chain (H2-Aa) (Mus musculus (Mouse)).